A 131-amino-acid chain; its full sequence is RxLR effector protein 62 (131 aa).

A signal peptide spans 1–19; that stretch reads MRLDILLFTLSSSTSLALS. The short motif at 49 to 60 is the RxLR-dEER element; that stretch reads RHLREEPANEAR. Residue Asn61 is glycosylated (N-linked (GlcNAc...) asparagine).

The protein belongs to the RxLR effector family.

It localises to the secreted. It is found in the host cell. In terms of biological role, secreted effector that suppresses callose deposition, a hallmark of pathogen-associated molecular pattern (PAMP)-triggered immunity (PTI) and renders host plants more susceptible to bacterial infection. Reduces host plant responsiveness to salicylic acid (SA) in haustoriated cells into which host-translocated effectors are delivered. The protein is RxLR effector protein 62 of Hyaloperonospora arabidopsidis (strain Emoy2) (Downy mildew agent).